The chain runs to 312 residues: Protein-methionine-sulfoxide reductase catalytic subunit MsrP (312 aa).

The segment at residues 1-42 (MALFRYPRPLPSEITPRDMYLSRRSLIGGAAALGAVSATADA) is a signal peptide (tat-type signal). Mo-molybdopterin is bound by residues Asn68, 71 to 72 (YE), Cys126, Ser161, Asn211, Arg216, and 227 to 229 (GIK).

It belongs to the MsrP family. In terms of assembly, heterodimer of a catalytic subunit (MsrP) and a heme-binding subunit (MsrQ). The cofactor is Mo-molybdopterin. In terms of processing, predicted to be exported by the Tat system. The position of the signal peptide cleavage has not been experimentally proven.

The protein resides in the periplasm. It carries out the reaction L-methionyl-[protein] + a quinone + H2O = L-methionyl-(S)-S-oxide-[protein] + a quinol. The catalysed reaction is L-methionyl-[protein] + a quinone + H2O = L-methionyl-(R)-S-oxide-[protein] + a quinol. In terms of biological role, part of the MsrPQ system that repairs oxidized periplasmic proteins containing methionine sulfoxide residues (Met-O), using respiratory chain electrons. Thus protects these proteins from oxidative-stress damage caused by reactive species of oxygen and chlorine generated by the host defense mechanisms. MsrPQ is essential for the maintenance of envelope integrity under bleach stress, rescuing a wide series of structurally unrelated periplasmic proteins from methionine oxidation. The catalytic subunit MsrP is non-stereospecific, being able to reduce both (R-) and (S-) diastereoisomers of methionine sulfoxide. The sequence is that of Protein-methionine-sulfoxide reductase catalytic subunit MsrP from Gluconobacter oxydans (strain 621H) (Gluconobacter suboxydans).